We begin with the raw amino-acid sequence, 331 residues long: Phosphate acyltransferase (331 aa).

Belongs to the PlsX family. Homodimer. Probably interacts with PlsY.

It is found in the cytoplasm. The catalysed reaction is a fatty acyl-[ACP] + phosphate = an acyl phosphate + holo-[ACP]. Its pathway is lipid metabolism; phospholipid metabolism. Its function is as follows. Catalyzes the reversible formation of acyl-phosphate (acyl-PO(4)) from acyl-[acyl-carrier-protein] (acyl-ACP). This enzyme utilizes acyl-ACP as fatty acyl donor, but not acyl-CoA. This is Phosphate acyltransferase from Ureaplasma parvum serovar 3 (strain ATCC 27815 / 27 / NCTC 11736).